Here is a 42-residue protein sequence, read N- to C-terminus: Cytochrome b559 subunit beta (42 aa).

The helical transmembrane segment at 17 to 33 (WLSIHALAVPTVFFLGA) threads the bilayer. A heme-binding site is contributed by His21.

The protein belongs to the PsbE/PsbF family. In terms of assembly, heterodimer of an alpha subunit and a beta subunit. PSII is composed of 1 copy each of membrane proteins PsbA, PsbB, PsbC, PsbD, PsbE, PsbF, PsbH, PsbI, PsbJ, PsbK, PsbL, PsbM, PsbT, PsbX, PsbY, PsbZ, Psb30/Ycf12, at least 3 peripheral proteins of the oxygen-evolving complex and a large number of cofactors. It forms dimeric complexes. The cofactor is heme b.

The protein localises to the plastid. The protein resides in the chloroplast thylakoid membrane. Its function is as follows. This b-type cytochrome is tightly associated with the reaction center of photosystem II (PSII). PSII is a light-driven water:plastoquinone oxidoreductase that uses light energy to abstract electrons from H(2)O, generating O(2) and a proton gradient subsequently used for ATP formation. It consists of a core antenna complex that captures photons, and an electron transfer chain that converts photonic excitation into a charge separation. The chain is Cytochrome b559 subunit beta from Tupiella akineta (Green alga).